The primary structure comprises 224 residues: UPF0758 protein PSPA7_6095 (224 aa).

Residues 102–224 (VLESPQAVRD…PLSLAEYGWM (123 aa)) form the MPN domain. The Zn(2+) site is built by histidine 173, histidine 175, and aspartate 186. A JAMM motif motif is present at residues 173–186 (HNHPSGDARPSLAD).

It belongs to the UPF0758 family.

This chain is UPF0758 protein PSPA7_6095, found in Pseudomonas paraeruginosa (strain DSM 24068 / PA7) (Pseudomonas aeruginosa (strain PA7)).